A 455-amino-acid polypeptide reads, in one-letter code: GTPase Der (455 aa).

2 consecutive EngA-type G domains span residues 4-174 (PIVA…PAGQ) and 183-358 (LKIA…SERN). Residues 10 to 17 (GRPNVGKS), 57 to 61 (DTAGL), 126 to 129 (NKAD), 189 to 196 (GRPNVGKS), 236 to 240 (DTAGI), and 301 to 304 (NKWD) each bind GTP. The region spanning 359–444 (KRVSTSDINN…PIILVFKGRE (86 aa)) is the KH-like domain.

Belongs to the TRAFAC class TrmE-Era-EngA-EngB-Septin-like GTPase superfamily. EngA (Der) GTPase family. Associates with the 50S ribosomal subunit.

Its function is as follows. GTPase that plays an essential role in the late steps of ribosome biogenesis. In Herpetosiphon aurantiacus (strain ATCC 23779 / DSM 785 / 114-95), this protein is GTPase Der.